The chain runs to 98 residues: Co-chaperonin GroES 5 (98 aa).

It belongs to the GroES chaperonin family. Heptamer of 7 subunits arranged in a ring. Interacts with the chaperonin GroEL.

The protein localises to the cytoplasm. Together with the chaperonin GroEL, plays an essential role in assisting protein folding. The GroEL-GroES system forms a nano-cage that allows encapsulation of the non-native substrate proteins and provides a physical environment optimized to promote and accelerate protein folding. GroES binds to the apical surface of the GroEL ring, thereby capping the opening of the GroEL channel. The chain is Co-chaperonin GroES 5 from Mesorhizobium japonicum (strain LMG 29417 / CECT 9101 / MAFF 303099) (Mesorhizobium loti (strain MAFF 303099)).